We begin with the raw amino-acid sequence, 166 residues long: NAD(P)H-quinone oxidoreductase subunit I, chloroplastic (166 aa).

4Fe-4S ferredoxin-type domains are found at residues 55–84 and 95–124; these read GRIH…VDWK and LNYS…MTEE. Residues Cys-64, Cys-67, Cys-70, Cys-74, Cys-104, Cys-107, Cys-110, and Cys-114 each coordinate [4Fe-4S] cluster.

It belongs to the complex I 23 kDa subunit family. NDH is composed of at least 16 different subunits, 5 of which are encoded in the nucleus. It depends on [4Fe-4S] cluster as a cofactor.

Its subcellular location is the plastid. It is found in the chloroplast thylakoid membrane. It carries out the reaction a plastoquinone + NADH + (n+1) H(+)(in) = a plastoquinol + NAD(+) + n H(+)(out). The enzyme catalyses a plastoquinone + NADPH + (n+1) H(+)(in) = a plastoquinol + NADP(+) + n H(+)(out). In terms of biological role, NDH shuttles electrons from NAD(P)H:plastoquinone, via FMN and iron-sulfur (Fe-S) centers, to quinones in the photosynthetic chain and possibly in a chloroplast respiratory chain. The immediate electron acceptor for the enzyme in this species is believed to be plastoquinone. Couples the redox reaction to proton translocation, and thus conserves the redox energy in a proton gradient. The chain is NAD(P)H-quinone oxidoreductase subunit I, chloroplastic from Chaenactis santolinoides (Santolina pincushion).